The following is a 292-amino-acid chain: Seed lectin (292 aa).

Residues 1-37 (MATSNSRPHLLQTHKPFSVVLAISITFFLLLLNKVNS) form the signal peptide. Residues N82 and N154 are each glycosylated (N-linked (GlcNAc...) asparagine). Mn(2+) contacts are provided by D163 and D165. Ca(2+)-binding residues include D165, H167, N169, and D172. Mn(2+) contacts are provided by D172 and H177. N-linked (GlcNAc...) asparagine glycosylation is present at N186.

Belongs to the leguminous lectin family.

Its function is as follows. Mannose/glucose-specific lectin. The polypeptide is Seed lectin (Styphnolobium japonicum (Japanese pagoda tree)).